A 521-amino-acid polypeptide reads, in one-letter code: Maturase K (521 aa).

Belongs to the intron maturase 2 family. MatK subfamily.

Its subcellular location is the plastid. The protein resides in the chloroplast. Usually encoded in the trnK tRNA gene intron. Probably assists in splicing its own and other chloroplast group II introns. This chain is Maturase K, found in Anthericum liliago (St-Bernard's lily).